Reading from the N-terminus, the 799-residue chain is MSTIYRESDSLESEPSPTPTTIPIQINMEEEKKDAFVKNIDEDVNNLTATTDEEDRDPESQKFDRHSIQEEGLVWKGDPTYLPNSPYPEVRSAVSIEDDPTIRLNHWRTWFLTTVFVVVFAGVNQFFSLRYPSLEINFLVAQVVCYPIGRILALLPDWKCSKVPFFDLNPGPFTKKEHAVVTIAVALTSSTAYAMYILNAQGSFYNMKLNVGYQFLLVWTSQMIGYGAAGLTRRWVVNPASSIWPQTLISVSLFDSLHSRKVEKTVANGWTMPRYRFFLIVLIGSFIWYWVPGFLFTGLSYFNVILWGSKTRHNFIANTIFGTQSGLGALPITFDYTQVSQAMSGSVFATPFYVSANTYASVLIFFVIVLPCLYFTNTWYAKYMPVISGSTYDNTQNKYNVTKILNEDYSINLEKYKEYSPVFVPFSYLLSYALNFAAVIAVFVHCILYHGKDIVAKFKDRKNGGTDIHMRIYSKNYKDCPDWWYLLLQIVMIGLGFVAVCCFDTKFPAWAFVIAILISLVNFIPQGILEAMTNQHVGLNIITELICGYMLPLRPMANLLFKLYGFIVMRQGLNLSRDLKLAMYMKVSPRLIFAVQIYATIISGMVNVGVQEWMMHNIDGLCTTDQPNGFTCANGRTVFNASIIWSLPKYLFSSGRIYNPLMWFFLIGLLFPLAVYAVQWKFPKFKFAKHIHTPVFFTGPGNIPPSTPYNYSLFFAMSFCLNLIRKRWRAWFNKYNFVMGAGVEAGVAISVVIIFLCVQYPGGKLSWWGNNVWKRTYDNDYKKFYTLKKGETFGYDKWW.

2 disordered regions span residues 1–26 and 43–64; these read MSTI…PIQI and DVNN…QKFD. The Extracellular segment spans residues 1–108; that stretch reads MSTIYRESDS…DPTIRLNHWR (108 aa). Low complexity predominate over residues 13–26; that stretch reads SEPSPTPTTIPIQI. Asparagine 46 carries N-linked (GlcNAc...) asparagine glycosylation. Residues threonine 48, threonine 50, and threonine 51 each carry the phosphothreonine modification. The helical transmembrane segment at 109–129 threads the bilayer; sequence TWFLTTVFVVVFAGVNQFFSL. Over 130 to 135 the chain is Cytoplasmic; the sequence is RYPSLE. Residues 136-156 form a helical membrane-spanning segment; sequence INFLVAQVVCYPIGRILALLP. The Extracellular portion of the chain corresponds to 157-177; that stretch reads DWKCSKVPFFDLNPGPFTKKE. A helical membrane pass occupies residues 178–198; the sequence is HAVVTIAVALTSSTAYAMYIL. The Cytoplasmic segment spans residues 199–210; that stretch reads NAQGSFYNMKLN. Residues 211 to 231 form a helical membrane-spanning segment; the sequence is VGYQFLLVWTSQMIGYGAAGL. Residues 232 to 276 are Extracellular-facing; sequence TRRWVVNPASSIWPQTLISVSLFDSLHSRKVEKTVANGWTMPRYR. The chain crosses the membrane as a helical span at residues 277 to 297; it reads FFLIVLIGSFIWYWVPGFLFT. Over 298–313 the chain is Cytoplasmic; it reads GLSYFNVILWGSKTRH. Residues 314–334 traverse the membrane as a helical segment; that stretch reads NFIANTIFGTQSGLGALPITF. Topologically, residues 335-359 are extracellular; that stretch reads DYTQVSQAMSGSVFATPFYVSANTY. The chain crosses the membrane as a helical span at residues 360 to 380; sequence ASVLIFFVIVLPCLYFTNTWY. Topologically, residues 381 to 428 are cytoplasmic; that stretch reads AKYMPVISGSTYDNTQNKYNVTKILNEDYSINLEKYKEYSPVFVPFSY. The chain crosses the membrane as a helical span at residues 429-449; the sequence is LLSYALNFAAVIAVFVHCILY. Residues 450 to 482 lie on the Extracellular side of the membrane; sequence HGKDIVAKFKDRKNGGTDIHMRIYSKNYKDCPD. A helical membrane pass occupies residues 483–503; the sequence is WWYLLLQIVMIGLGFVAVCCF. Residues 504–508 lie on the Cytoplasmic side of the membrane; it reads DTKFP. Residues 509–529 form a helical membrane-spanning segment; the sequence is AWAFVIAILISLVNFIPQGIL. Over 530 to 540 the chain is Extracellular; sequence EAMTNQHVGLN. A helical transmembrane segment spans residues 541–561; it reads IITELICGYMLPLRPMANLLF. Over 562–590 the chain is Cytoplasmic; the sequence is KLYGFIVMRQGLNLSRDLKLAMYMKVSPR. A helical transmembrane segment spans residues 591-611; the sequence is LIFAVQIYATIISGMVNVGVQ. Over 612 to 659 the chain is Extracellular; it reads EWMMHNIDGLCTTDQPNGFTCANGRTVFNASIIWSLPKYLFSSGRIYN. Residue asparagine 640 is glycosylated (N-linked (GlcNAc...) asparagine). Residues 660 to 680 form a helical membrane-spanning segment; it reads PLMWFFLIGLLFPLAVYAVQW. Residues 681-736 lie on the Cytoplasmic side of the membrane; the sequence is KFPKFKFAKHIHTPVFFTGPGNIPPSTPYNYSLFFAMSFCLNLIRKRWRAWFNKYN. The helical transmembrane segment at 737–757 threads the bilayer; that stretch reads FVMGAGVEAGVAISVVIIFLC. Residues 758–799 lie on the Extracellular side of the membrane; it reads VQYPGGKLSWWGNNVWKRTYDNDYKKFYTLKKGETFGYDKWW.

The protein belongs to the oligopeptide OPT transporter family.

The protein localises to the cell membrane. Functionally, high affinity transporter for glutathione. Also transports tetra- and pentapeptides like the opioids leucine enkephalin (Tyr-Gly-Gly-Phe-Leu) and methionine enkephalin (Tyr-Gly-Gly_Phe-Met) across the cell membrane. The protein is Oligopeptide transporter 1 (OPT1) of Saccharomyces cerevisiae (strain ATCC 204508 / S288c) (Baker's yeast).